We begin with the raw amino-acid sequence, 528 residues long: Protein MGF 505-7R (528 aa).

2 ANK repeats span residues Ser54–Tyr83 and Asn261–Thr291.

This sequence belongs to the asfivirus MGF 505 family. As to quaternary structure, interacts with host STING1. Interacts with host JAK1; this interaction leads to JAK1 degradation. Interacts with host JAK2; this interaction leads to JAK2 degradation. Interacts with host RELA; this interaction inhibits NF-kappa-B promoter activity.

It localises to the host cytoplasm. Functionally, plays a role in virus cell tropism, and may be required for efficient virus replication in macrophages. Interferes with host NF-kappa-B promoter activity mediated by TLR8. Mechanistically, inhibits the phosphorylation and subsequent nuclear translocation of host NF-kappa-B RELA subunit downstream of TLR8. Promotes the expression of the autophagy-related protein host ULK1 to degrade host STING and inhibit the interferon response. Also inhibits JAK1- and JAK2-mediated signaling and thus negatively regulates the IFN-gamma signaling. The protein is Protein MGF 505-7R of African swine fever virus (isolate Tick/Malawi/Lil 20-1/1983) (ASFV).